We begin with the raw amino-acid sequence, 341 residues long: Tryptophan--tRNA ligase (341 aa).

Residues Arg-11–Thr-13 and Gly-19–His-20 each bind ATP. A 'HIGH' region motif is present at residues Pro-12–His-20. Asp-140 contributes to the L-tryptophan binding site. Residues Gly-152 to Asp-154, Leu-194, and Lys-202 to Ser-206 contribute to the ATP site. Positions Lys-202 to Ser-206 match the 'KMSKS' region motif.

It belongs to the class-I aminoacyl-tRNA synthetase family. As to quaternary structure, homodimer.

It localises to the cytoplasm. It catalyses the reaction tRNA(Trp) + L-tryptophan + ATP = L-tryptophyl-tRNA(Trp) + AMP + diphosphate + H(+). Functionally, catalyzes the attachment of tryptophan to tRNA(Trp). The protein is Tryptophan--tRNA ligase of Streptococcus pneumoniae serotype 4 (strain ATCC BAA-334 / TIGR4).